The primary structure comprises 158 residues: 3-dehydroquinate dehydratase (158 aa).

Tyrosine 24 acts as the Proton acceptor in catalysis. Substrate contacts are provided by asparagine 75, histidine 81, and aspartate 88. Histidine 101 serves as the catalytic Proton donor. Substrate contacts are provided by residues 102 to 103 and arginine 112; that span reads LS.

It belongs to the type-II 3-dehydroquinase family. As to quaternary structure, homododecamer.

It carries out the reaction 3-dehydroquinate = 3-dehydroshikimate + H2O. It participates in metabolic intermediate biosynthesis; chorismate biosynthesis; chorismate from D-erythrose 4-phosphate and phosphoenolpyruvate: step 3/7. Functionally, catalyzes a trans-dehydration via an enolate intermediate. The polypeptide is 3-dehydroquinate dehydratase (Bartonella bacilliformis (strain ATCC 35685 / KC583 / Herrer 020/F12,63)).